A 260-amino-acid polypeptide reads, in one-letter code: MLKTRIIPCLDVKDGRVVKGVNFVALRDAGDPVEQARAYDAAGADELMFLDITASSDNRGLLLDVISRTAEVCFMPVSVGGGVRQVSDMRRLLLAGADKVSVNTAAVENPDLVAAGADAFGAQCVVVAIDAKARGDGSGWNVWTYGGRKDTGIDVVDWAAKVVERGAGEILLTSMDRDGAKIGYDIPLLKAVTGAVTVPVIASGGAGTTDHLVEAARDGHAAAVLAASIFHFGEISIGQAKRAMADAGIPVRLDTLKGAA.

Residues Asp11 and Asp130 contribute to the active site.

It belongs to the HisA/HisF family. In terms of assembly, heterodimer of HisH and HisF.

The protein resides in the cytoplasm. It carries out the reaction 5-[(5-phospho-1-deoxy-D-ribulos-1-ylimino)methylamino]-1-(5-phospho-beta-D-ribosyl)imidazole-4-carboxamide + L-glutamine = D-erythro-1-(imidazol-4-yl)glycerol 3-phosphate + 5-amino-1-(5-phospho-beta-D-ribosyl)imidazole-4-carboxamide + L-glutamate + H(+). It functions in the pathway amino-acid biosynthesis; L-histidine biosynthesis; L-histidine from 5-phospho-alpha-D-ribose 1-diphosphate: step 5/9. Functionally, IGPS catalyzes the conversion of PRFAR and glutamine to IGP, AICAR and glutamate. The HisF subunit catalyzes the cyclization activity that produces IGP and AICAR from PRFAR using the ammonia provided by the HisH subunit. This is Imidazole glycerol phosphate synthase subunit HisF from Caulobacter sp. (strain K31).